We begin with the raw amino-acid sequence, 346 residues long: 3-isopropylmalate dehydrogenase (346 aa).

76–87 is a binding site for NAD(+); the sequence is GPKWTDPNNRPE. Arg94, Arg104, Arg132, and Asp217 together coordinate substrate. Residues Asp217, Asp241, and Asp245 each coordinate Mg(2+). 275–287 lines the NAD(+) pocket; sequence GSAPDIANQDIAN.

This sequence belongs to the isocitrate and isopropylmalate dehydrogenases family. LeuB type 1 subfamily. In terms of assembly, homodimer. The cofactor is Mg(2+). Mn(2+) serves as cofactor.

It localises to the cytoplasm. It catalyses the reaction (2R,3S)-3-isopropylmalate + NAD(+) = 4-methyl-2-oxopentanoate + CO2 + NADH. The protein operates within amino-acid biosynthesis; L-leucine biosynthesis; L-leucine from 3-methyl-2-oxobutanoate: step 3/4. Functionally, catalyzes the oxidation of 3-carboxy-2-hydroxy-4-methylpentanoate (3-isopropylmalate) to 3-carboxy-4-methyl-2-oxopentanoate. The product decarboxylates to 4-methyl-2 oxopentanoate. This is 3-isopropylmalate dehydrogenase from Staphylococcus saprophyticus subsp. saprophyticus (strain ATCC 15305 / DSM 20229 / NCIMB 8711 / NCTC 7292 / S-41).